Here is a 613-residue protein sequence, read N- to C-terminus: Protein translocase subunit SecD (613 aa).

Helical transmembrane passes span 10-30, 452-472, 477-497, 503-523, 548-568, and 576-596; these read ALVV…WFYF, KGTL…VVYY, LVAD…MSMI, LPGI…NVLI, VFWT…VLFQ, and GFAV…IVVT.

Belongs to the SecD/SecF family. SecD subfamily. As to quaternary structure, forms a complex with SecF. Part of the essential Sec protein translocation apparatus which comprises SecA, SecYEG and auxiliary proteins SecDF-YajC and YidC.

The protein resides in the cell inner membrane. Its function is as follows. Part of the Sec protein translocase complex. Interacts with the SecYEG preprotein conducting channel. SecDF uses the proton motive force (PMF) to complete protein translocation after the ATP-dependent function of SecA. This Anaeromyxobacter dehalogenans (strain 2CP-C) protein is Protein translocase subunit SecD.